Reading from the N-terminus, the 103-residue chain is Thioredoxin-1 (103 aa).

One can recognise a Thioredoxin domain in the interval 2 to 103 (VTQFKTASEF…AIKQAIAANA (102 aa)). Active-site nucleophile residues include Cys30 and Cys33. A disulfide bridge connects residues Cys30 and Cys33. Glycyl lysine isopeptide (Lys-Gly) (interchain with G-Cter in ubiquitin) cross-links involve residues Lys54, Lys66, and Lys96.

It belongs to the thioredoxin family. In terms of assembly, monomer. Part of the heterodimeric LMA1 complex together with the proteinase inhibitor PBI2. Most of the thioredoxin of yeast is in this complex rather than the well-studied monomer. LMA1 binds to the ATPase SEC18. Post-translationally, reversible disulfide bond formation between Cys-30 and Cys-33, reverted by thioredoxin reductase TRR1 using NADPH as hydrogen donor.

Its subcellular location is the nucleus. It localises to the cytoplasm. It is found in the golgi apparatus membrane. The protein resides in the mitochondrion intermembrane space. Functionally, participates as a hydrogen donor in redox reactions through the reversible oxidation of its active center dithiol to a disulfide, accompanied by the transfer of 2 electrons and 2 protons. It is involved in many cellular processes, including deoxyribonucleotide synthesis, repair of oxidatively damaged proteins, protein folding, sulfur metabolism, and redox homeostasis. Thioredoxin-dependent enzymes include phosphoadenosine-phosphosulfate reductase MET16, alkyl-hydroperoxide reductase DOT5, thioredoxin peroxidases TSA1 and TSA2, alkyl hydroperoxide reductase AHP1, and peroxiredoxin HYR1. Thioredoxin is also involved in protection against reducing stress. As part of the LMA1 complex, it is involved in the facilitation of vesicle fusion such as homotypic vacuole and ER-derived COPII vesicle fusion with the Golgi. This activity does not require the redox mechanism. This is Thioredoxin-1 (TRX1) from Saccharomyces cerevisiae (strain ATCC 204508 / S288c) (Baker's yeast).